The following is a 239-amino-acid chain: Dihydromethanopterin reductase (acceptor) (239 aa).

4Fe-4S ferredoxin-type domains lie at 144-175 and 176-205; these read MPYN…EKNG and VTDQ…GGPV. The [4Fe-4S] cluster site is built by cysteine 153, cysteine 156, cysteine 159, cysteine 165, cysteine 185, cysteine 188, cysteine 191, and cysteine 195.

Homodimer. Requires [4Fe-4S] cluster as cofactor.

The catalysed reaction is 5,6,7,8-tetrahydromethanopterin + A = 7,8-dihydromethanopterin + AH2. The protein operates within cofactor biosynthesis; 5,6,7,8-tetrahydromethanopterin biosynthesis. In terms of biological role, involved in the biosynthesis of tetrahydromethanopterin, a coenzyme used in methanogenesis. Catalyzes the reduction of dihydromethanopterin (H(2)MPT) to tetrahydromethanopterin (H(4)MPT). Ferredoxin may serve as an electron donor. This Methanosarcina mazei (strain ATCC BAA-159 / DSM 3647 / Goe1 / Go1 / JCM 11833 / OCM 88) (Methanosarcina frisia) protein is Dihydromethanopterin reductase (acceptor).